The primary structure comprises 699 residues: tRNA(Met) cytidine acetyltransferase TmcA (699 aa).

ATP is bound by residues Gln-179, 201 to 210 (GRGKSTLAGM), and Arg-323. Positions 359 to 543 (IEIPLYEQRD…SGCYTAMALL (185 aa)) constitute an N-acetyltransferase domain. Acetyl-CoA-binding positions include 471 to 473 (VAV), Glu-511, and Arg-518.

Belongs to the RNA cytidine acetyltransferase family. TmcA subfamily.

The protein resides in the cytoplasm. It catalyses the reaction cytidine(34) in elongator tRNA(Met) + acetyl-CoA + ATP + H2O = N(4)-acetylcytidine(34) in elongator tRNA(Met) + ADP + phosphate + CoA + H(+). Catalyzes the formation of N(4)-acetylcytidine (ac(4)C) at the wobble position of tRNA(Met), by using acetyl-CoA as an acetyl donor and ATP (or GTP). This is tRNA(Met) cytidine acetyltransferase TmcA from Yersinia pestis (strain D106004).